Consider the following 257-residue polypeptide: Acetylglutamate kinase (257 aa).

Residues 40–41 (GG), Arg62, and Asn155 each bind substrate.

This sequence belongs to the acetylglutamate kinase family. ArgB subfamily.

The protein resides in the cytoplasm. The enzyme catalyses N-acetyl-L-glutamate + ATP = N-acetyl-L-glutamyl 5-phosphate + ADP. The protein operates within amino-acid biosynthesis; L-arginine biosynthesis; N(2)-acetyl-L-ornithine from L-glutamate: step 2/4. In terms of biological role, catalyzes the ATP-dependent phosphorylation of N-acetyl-L-glutamate. The sequence is that of Acetylglutamate kinase from Shouchella clausii (strain KSM-K16) (Alkalihalobacillus clausii).